Reading from the N-terminus, the 438-residue chain is DEAD-box ATP-dependent RNA helicase CshB (438 aa).

Positions 4-32 (TKFELYELKPFIIDAVHRLGFYEPTDIQK) match the Q motif motif. A Helicase ATP-binding domain is found at 35-208 (IPAVLKKESV…KKYMENPKYA (174 aa)). 48-55 (SQTGTGKT) serves as a coordination point for ATP. Residues 156–159 (DEAD) carry the DEAD box motif. In terms of domain architecture, Helicase C-terminal spans 235-385 (LLFDIMSHLN…EWKKGDDRQR (151 aa)). The tract at residues 380–438 (GDDRQRRKKRKKTPNEADEIAHRLVKKPKKVKPGYKKKMSYEMEKIKKKQRRNQSKKRK) is disordered. Residues 392–401 (TPNEADEIAH) are compositionally biased toward basic and acidic residues. Composition is skewed to basic residues over residues 402–417 (RLVK…YKKK) and 425–438 (IKKK…KKRK).

Belongs to the DEAD box helicase family. In terms of assembly, interacts with CspB when cells are transcriptionally active. May interact with RNA helicases CshA and DbpA (DeaD), may be a component of a possible RNA degradosome complex composed of rny, rnja, rnjb, pnp, pfkA and eno (although rnjA and rnjB's presence is unclear). Specifically interacts with pnp and rny.

It is found in the cytoplasm. It localises to the nucleoid. The enzyme catalyses ATP + H2O = ADP + phosphate + H(+). Its function is as follows. DEAD-box RNA helicase that plays a role in 70S ribosome assembly. May work in conjunction with the cold shock proteins to ensure proper initiation of transcription at low and optimal temperatures. This chain is DEAD-box ATP-dependent RNA helicase CshB, found in Bacillus subtilis (strain 168).